A 231-amino-acid polypeptide reads, in one-letter code: Endonuclease NucS (231 aa).

This sequence belongs to the NucS endonuclease family.

The protein localises to the cytoplasm. Its function is as follows. Cleaves both 3' and 5' ssDNA extremities of branched DNA structures. The sequence is that of Endonuclease NucS from Micrococcus luteus (strain ATCC 4698 / DSM 20030 / JCM 1464 / CCM 169 / CCUG 5858 / IAM 1056 / NBRC 3333 / NCIMB 9278 / NCTC 2665 / VKM Ac-2230) (Micrococcus lysodeikticus).